The chain runs to 341 residues: UDP-N-acetylenolpyruvoylglucosamine reductase (341 aa).

In terms of domain architecture, FAD-binding PCMH-type spans 13–185; it reads FGVEQSCLSM…TAVGLRLPKA (173 aa). Arg-161 is a catalytic residue. The active-site Proton donor is Ser-231. Glu-327 is a catalytic residue.

The protein belongs to the MurB family. The cofactor is FAD.

It localises to the cytoplasm. The catalysed reaction is UDP-N-acetyl-alpha-D-muramate + NADP(+) = UDP-N-acetyl-3-O-(1-carboxyvinyl)-alpha-D-glucosamine + NADPH + H(+). It functions in the pathway cell wall biogenesis; peptidoglycan biosynthesis. Its function is as follows. Cell wall formation. The protein is UDP-N-acetylenolpyruvoylglucosamine reductase of Shewanella sp. (strain MR-7).